Reading from the N-terminus, the 199-residue chain is Recombination protein RecR (199 aa).

The C4-type zinc finger occupies 57–72; it reads CSICGNITESDPCEIC. A Toprim domain is found at 80–176; sequence STIMVVEQPK…KVTRLAAGLA (97 aa).

It belongs to the RecR family.

Functionally, may play a role in DNA repair. It seems to be involved in an RecBC-independent recombinational process of DNA repair. It may act with RecF and RecO. This chain is Recombination protein RecR, found in Lactobacillus johnsonii (strain CNCM I-12250 / La1 / NCC 533).